The sequence spans 146 residues: Large ribosomal subunit protein bL21 (146 aa).

A disordered region spans residues 115-146 (KSISLGKSAPKSSAKKETVKKETKPKSEKSTN). Residues 128–146 (AKKETVKKETKPKSEKSTN) are compositionally biased toward basic and acidic residues.

This sequence belongs to the bacterial ribosomal protein bL21 family. Part of the 50S ribosomal subunit. Contacts protein L20.

In terms of biological role, this protein binds to 23S rRNA in the presence of protein L20. In Prochlorococcus marinus (strain MIT 9312), this protein is Large ribosomal subunit protein bL21.